We begin with the raw amino-acid sequence, 518 residues long: ATP synthase F(1) complex catalytic subunit beta, mitochondrial (518 aa).

ADP contacts are provided by Gly-199, Val-200, Gly-201, Lys-202, Thr-203, and Val-204. Gly-199 lines the ATP pocket. Gly-199, Val-200, Gly-201, Lys-202, and Thr-203 together coordinate phosphate. 4 residues coordinate ATP: Gly-201, Lys-202, Thr-203, and Val-204. Thr-203 provides a ligand contact to Mg(2+). Glu-228 contributes to the Mg(2+) binding site. Arg-229 contacts ATP.

This sequence belongs to the ATPase alpha/beta chains family. In terms of assembly, homotrimer. Component of the ATP synthase complex composed at least of ATP5F1A/subunit alpha, ATP5F1B/subunit beta, ATP5MC1/subunit c (homooctomer), MT-ATP6/subunit a, MT-ATP8/subunit 8, ATP5ME/subunit e, ATP5MF/subunit f, ATP5MG/subunit g, ATP5MK/subunit k, ATP5MJ/subunit j, ATP5F1C/subunit gamma, ATP5F1D/subunit delta, ATP5F1E/subunit epsilon, ATP5PF/subunit F6, ATP5PB/subunit b, ATP5PD/subunit d, ATP5PO/subunit OSCP. ATP synthase complex consists of a soluble F(1) head domain (subunits alpha(3) and beta(3)) - the catalytic core - and a membrane F(0) domain - the membrane proton channel (subunits c, a, 8, e, f, g, k and j). These two domains are linked by a central stalk (subunits gamma, delta, and epsilon) rotating inside the F1 region and a stationary peripheral stalk (subunits F6, b, d, and OSCP).

It localises to the mitochondrion inner membrane. The enzyme catalyses ATP + H2O + 4 H(+)(in) = ADP + phosphate + 5 H(+)(out). In terms of biological role, catalytic subunit beta, of the mitochondrial membrane ATP synthase complex (F(1)F(0) ATP synthase or Complex V) that produces ATP from ADP in the presence of a proton gradient across the membrane which is generated by electron transport complexes of the respiratory chain. ATP synthase complex consist of a soluble F(1) head domain - the catalytic core - and a membrane F(1) domain - the membrane proton channel. These two domains are linked by a central stalk rotating inside the F(1) region and a stationary peripheral stalk. During catalysis, ATP synthesis in the catalytic domain of F(1) is coupled via a rotary mechanism of the central stalk subunits to proton translocation. In vivo, can only synthesize ATP although its ATP hydrolase activity can be activated artificially in vitro. With the subunit alpha (ATP5F1A), forms the catalytic core in the F(1) domain. This Cyprinus carpio (Common carp) protein is ATP synthase F(1) complex catalytic subunit beta, mitochondrial.